The chain runs to 89 residues: Small ribosomal subunit protein uS15 (89 aa).

Belongs to the universal ribosomal protein uS15 family. As to quaternary structure, part of the 30S ribosomal subunit. Forms a bridge to the 50S subunit in the 70S ribosome, contacting the 23S rRNA.

In terms of biological role, one of the primary rRNA binding proteins, it binds directly to 16S rRNA where it helps nucleate assembly of the platform of the 30S subunit by binding and bridging several RNA helices of the 16S rRNA. Forms an intersubunit bridge (bridge B4) with the 23S rRNA of the 50S subunit in the ribosome. The polypeptide is Small ribosomal subunit protein uS15 (Mycobacterium marinum (strain ATCC BAA-535 / M)).